The primary structure comprises 824 residues: Leucine--tRNA ligase (824 aa).

Residues 41–51 (PYPSGTLHVGH) carry the 'HIGH' region motif. The 'KMSKS' region motif lies at 580–584 (KMSKS). ATP is bound at residue Lys583.

This sequence belongs to the class-I aminoacyl-tRNA synthetase family.

The protein resides in the cytoplasm. The catalysed reaction is tRNA(Leu) + L-leucine + ATP = L-leucyl-tRNA(Leu) + AMP + diphosphate. In Thermotoga maritima (strain ATCC 43589 / DSM 3109 / JCM 10099 / NBRC 100826 / MSB8), this protein is Leucine--tRNA ligase.